A 120-amino-acid polypeptide reads, in one-letter code: UPF0344 protein lmo2265 (120 aa).

Helical transmembrane passes span 3 to 23, 33 to 53, 62 to 82, and 92 to 112; these read GYIH…ALLI, MLQM…IMMV, ILAI…EMLL, and GMFL…GFYL.

It belongs to the UPF0344 family.

It localises to the cell membrane. The sequence is that of UPF0344 protein lmo2265 from Listeria monocytogenes serovar 1/2a (strain ATCC BAA-679 / EGD-e).